A 199-amino-acid chain; its full sequence is Zinc finger matrin-type protein 2 (199 aa).

Alanine 2 carries the N-acetylalanine modification. Glycyl lysine isopeptide (Lys-Gly) (interchain with G-Cter in SUMO2) cross-links involve residues lysine 8, lysine 36, lysine 39, lysine 45, lysine 55, lysine 61, lysine 64, lysine 70, lysine 102, and lysine 123. The tract at residues 27–46 (KRLTEEREKKDGKPVQPVKR) is disordered. The Matrin-type zinc finger occupies 80–104 (YYCNVCDCVVKDSINFLDHINGKKH). Residues 150–173 (REEEEKAKAYKKEKQKEKKRRAEE) show a composition bias toward basic and acidic residues. The tract at residues 150–175 (REEEEKAKAYKKEKQKEKKRRAEEDL) is disordered.

Component of the spliceosome B complex.

The protein localises to the nucleus. Its function is as follows. Involved in pre-mRNA splicing as a component of the spliceosome. The sequence is that of Zinc finger matrin-type protein 2 (ZMAT2) from Homo sapiens (Human).